A 340-amino-acid polypeptide reads, in one-letter code: MPEDDVRNKFLDAGDSDDDAGHGSDSEDDFQKGGRNAKRRRVSDDEDSEADDFTDAEEEHDQDDAESKDAPAKDGQETTDGKEKKDGKKEKEKKSVLASDLPGMTKPLTKKNLIVTEEAIKKSGVVYISRVPPFMTPAKLRSLLEPYGKLNRIFLAPEDPVARRKRIRSGGNKKKMFTEGWIEFVKKKDAKKACELLNARPIGGKKGSYYRDDIWNLLYLKGFKWHNLTEQIAAENAERSSRMRAEISKTTKENKEFVRNVERAKVLQGIQAKKASKGSKAGGEGAAQVTESTIPSAAATTTTTTNDDKRRTFKQIPLAKKRKLDETQPEQVQRVLSKIF.

Composition is skewed to basic and acidic residues over residues 1-12 (MPEDDVRNKFLD) and 19-32 (DAGH…DFQK). The disordered stretch occupies residues 1–103 (MPEDDVRNKF…KSVLASDLPG (103 aa)). The segment covering 44–64 (DDEDSEADDFTDAEEEHDQDD) has biased composition (acidic residues). Residues 65-95 (AESKDAPAKDGQETTDGKEKKDGKKEKEKKS) are compositionally biased toward basic and acidic residues. The region spanning 124 to 214 (GVVYISRVPP…KKGSYYRDDI (91 aa)) is the RRM domain. Residues 272–329 (AKKASKGSKAGGEGAAQVTESTIPSAAATTTTTTNDDKRRTFKQIPLAKKRKLDETQP) are disordered.

This sequence belongs to the ESF2/ABP1 family.

Its subcellular location is the nucleus. It localises to the nucleolus. In terms of biological role, involved in the small subunit (SSU) processome assembly and function, and in the 18S rRNA synthesis. Required for the early cleavages at sites A0, A1 and A2. This is Pre-rRNA-processing protein esf-2 (esf-2) from Neurospora crassa (strain ATCC 24698 / 74-OR23-1A / CBS 708.71 / DSM 1257 / FGSC 987).